A 284-amino-acid polypeptide reads, in one-letter code: Acetylglutamate kinase (284 aa).

Substrate contacts are provided by residues 66–67 (GG), arginine 88, and asparagine 179.

Belongs to the acetylglutamate kinase family. ArgB subfamily.

It localises to the cytoplasm. It catalyses the reaction N-acetyl-L-glutamate + ATP = N-acetyl-L-glutamyl 5-phosphate + ADP. The protein operates within amino-acid biosynthesis; L-arginine biosynthesis; N(2)-acetyl-L-ornithine from L-glutamate: step 2/4. Catalyzes the ATP-dependent phosphorylation of N-acetyl-L-glutamate. This is Acetylglutamate kinase from Actinobacillus pleuropneumoniae serotype 3 (strain JL03).